The sequence spans 138 residues: Large ribosomal subunit protein uL16 (138 aa).

A compositionally biased stretch (basic residues) spans 1–13 (MLQPARRKYRKEQ). The tract at residues 1 to 21 (MLQPARRKYRKEQKGRNTGIA) is disordered.

The protein belongs to the universal ribosomal protein uL16 family. As to quaternary structure, part of the 50S ribosomal subunit.

Binds 23S rRNA and is also seen to make contacts with the A and possibly P site tRNAs. This Albidiferax ferrireducens (strain ATCC BAA-621 / DSM 15236 / T118) (Rhodoferax ferrireducens) protein is Large ribosomal subunit protein uL16.